Reading from the N-terminus, the 436-residue chain is MLRTTFRKGFNLKCFSKDWNQTRQYSNYTKMTIFDTNVKTIQKNNTVTNVDDPKHYDYLMNEVADRLADRILDIKDIKCGNVLDFGSRNGALFKYIQEKGAKIDKYYMVESSKELLYRDDNNVSQENEDDNNNNKVKPTKILVNSLEDKIEGIEDQSLDLIISNLSLHWVNDLPGVFGGLKRLLKPNGVFLASLFGEDTLMELKDSLYLAEIEREGGFSPHVSPFTKISDIGNILSKNRYTLPTVDTEKITINYDNMFVLMRDLQNMGENNAILKRRNYTSKDTFLAASAIYKHLYGNEDNNSIPATFQIIYLIGWAPHESQQKPLQRGSAKKHFSEISGTSSFGYKFDNDSSIPSILTNENNSVTLSQQQQQQGIEPQQSNDDSINEPFPKTDDFVIKRLDYHGNFHFEKQQQQQQQQDQNKESSDEINKNKDDK.

The N-terminal 25 residues, 1–25, are a transit peptide targeting the mitochondrion; that stretch reads MLRTTFRKGFNLKCFSKDWNQTRQY. The segment at 365-436 is disordered; that stretch reads VTLSQQQQQQ…DEINKNKDDK (72 aa). Low complexity predominate over residues 369-380; it reads QQQQQQGIEPQQ. Basic and acidic residues-rich tracts occupy residues 391 to 411 and 421 to 436; these read PKTDDFVIKRLDYHGNFHFEK and QNKESSDEINKNKDDK.

This sequence belongs to the methyltransferase superfamily.

It localises to the mitochondrion. Involved in the assembly of mitochondrial NADH:ubiquinone oxidoreductase complex (complex I, MT-ND1) at early stages. Probably acts as an arginine hydroxylase. May also have methyltransferase activity. The polypeptide is Arginine-hydroxylase NDUFAF5, mitochondrial (Dictyostelium discoideum (Social amoeba)).